We begin with the raw amino-acid sequence, 273 residues long: MDWFLLLKGLILGIVEGLTEFLPISSTGHLILVSDLLNFNDEKGKVFTIVIQLGAILAVCWEYRVKLRHVVTDIGSRQDANRFVLNLLIAFLPAAILGLLFIKTIKQYLFHPVPVALAFIVGGLLILWAERRPHVVDVERVEDMDWKHALKVGLAQCLALIPGTSRSGATIIGGLFFGLSRKAATEFSFFLAIPVMFAATFYDLYKNRDILHLDDASVFAIGFVASFISALLAVRGLLRFVSQHDFSVFAWYRIGFGIIVLITAYSGMVQWSG.

A run of 7 helical transmembrane segments spans residues 4 to 24, 43 to 63, 83 to 103, 109 to 129, 184 to 204, 218 to 238, and 248 to 268; these read FLLLKGLILGIVEGLTEFLPI, KGKVFTIVIQLGAILAVCWEY, FVLNLLIAFLPAAILGLLFIK, LFHPVPVALAFIVGGLLILWA, ATEFSFFLAIPVMFAATFYDL, VFAIGFVASFISALLAVRGLL, and VFAWYRIGFGIIVLITAYSGM.

The protein belongs to the UppP family.

The protein localises to the cell inner membrane. It catalyses the reaction di-trans,octa-cis-undecaprenyl diphosphate + H2O = di-trans,octa-cis-undecaprenyl phosphate + phosphate + H(+). Functionally, catalyzes the dephosphorylation of undecaprenyl diphosphate (UPP). Confers resistance to bacitracin. This chain is Undecaprenyl-diphosphatase, found in Nitrosospira multiformis (strain ATCC 25196 / NCIMB 11849 / C 71).